The sequence spans 410 residues: FBD-associated F-box protein At5g38590 (410 aa).

The region spanning 1 to 47 (MDKINGLPDDLLVKILSYVPTDIAVSTSILSKRWEFLWMWLPNLDYT) is the F-box domain. The 51-residue stretch at 335-385 (GWNQPSSVPECLLSSLQIFKWPQYLGRPEDRDIAVYILKNARHLKKTTILA) folds into the FBD domain.

The sequence is that of FBD-associated F-box protein At5g38590 from Arabidopsis thaliana (Mouse-ear cress).